The sequence spans 182 residues: Ribosome maturation factor RimM (182 aa).

Positions 99–176 constitute a PRC barrel domain; sequence DDEYYHADLI…ELPAEIEGDT (78 aa).

It belongs to the RimM family. Binds ribosomal protein uS19.

The protein resides in the cytoplasm. Its function is as follows. An accessory protein needed during the final step in the assembly of 30S ribosomal subunit, possibly for assembly of the head region. Essential for efficient processing of 16S rRNA. May be needed both before and after RbfA during the maturation of 16S rRNA. It has affinity for free ribosomal 30S subunits but not for 70S ribosomes. This chain is Ribosome maturation factor RimM, found in Rhodopseudomonas palustris (strain HaA2).